A 319-amino-acid polypeptide reads, in one-letter code: 4-diphosphocytidyl-2-C-methyl-D-erythritol kinase (319 aa).

Residue lysine 21 is part of the active site. Position 106 to 116 (106 to 116) interacts with ATP; sequence PIGAGLAGGSS. Aspartate 148 is a catalytic residue.

The protein belongs to the GHMP kinase family. IspE subfamily.

It catalyses the reaction 4-CDP-2-C-methyl-D-erythritol + ATP = 4-CDP-2-C-methyl-D-erythritol 2-phosphate + ADP + H(+). The protein operates within isoprenoid biosynthesis; isopentenyl diphosphate biosynthesis via DXP pathway; isopentenyl diphosphate from 1-deoxy-D-xylulose 5-phosphate: step 3/6. In terms of biological role, catalyzes the phosphorylation of the position 2 hydroxy group of 4-diphosphocytidyl-2C-methyl-D-erythritol. The sequence is that of 4-diphosphocytidyl-2-C-methyl-D-erythritol kinase from Prochlorococcus marinus (strain SARG / CCMP1375 / SS120).